The primary structure comprises 152 residues: Deoxyuridine 5'-triphosphate nucleotidohydrolase (152 aa).

Residues 72–74 (RSG), Asn-85, and 89–91 (TID) contribute to the substrate site.

This sequence belongs to the dUTPase family. Mg(2+) is required as a cofactor.

The enzyme catalyses dUTP + H2O = dUMP + diphosphate + H(+). Its pathway is pyrimidine metabolism; dUMP biosynthesis; dUMP from dCTP (dUTP route): step 2/2. Functionally, this enzyme is involved in nucleotide metabolism: it produces dUMP, the immediate precursor of thymidine nucleotides and it decreases the intracellular concentration of dUTP so that uracil cannot be incorporated into DNA. This is Deoxyuridine 5'-triphosphate nucleotidohydrolase from Rhodopseudomonas palustris (strain ATCC BAA-98 / CGA009).